The primary structure comprises 172 residues: Sec-independent protein translocase protein TatB (172 aa).

Residues 1-21 form a helical membrane-spanning segment; the sequence is MFDIGWSELLVIGVVALIAIG.

The protein belongs to the TatB family. As to quaternary structure, the Tat system comprises two distinct complexes: a TatABC complex, containing multiple copies of TatA, TatB and TatC subunits, and a separate TatA complex, containing only TatA subunits. Substrates initially bind to the TatABC complex, which probably triggers association of the separate TatA complex to form the active translocon.

It is found in the cell inner membrane. In terms of biological role, part of the twin-arginine translocation (Tat) system that transports large folded proteins containing a characteristic twin-arginine motif in their signal peptide across membranes. Together with TatC, TatB is part of a receptor directly interacting with Tat signal peptides. TatB may form an oligomeric binding site that transiently accommodates folded Tat precursor proteins before their translocation. This is Sec-independent protein translocase protein TatB from Rhodopseudomonas palustris (strain BisB18).